Consider the following 359-residue polypeptide: Peptide methionine sulfoxide reductase MsrA/MsrB (359 aa).

Residues R36–K189 are peptide methionine sulfoxide reductase A. Residue C44 is part of the active site. A MsrB domain is found at D206–L329. C318 (nucleophile) is an active-site residue.

The protein in the N-terminal section; belongs to the MsrA Met sulfoxide reductase family. It in the C-terminal section; belongs to the MsrB Met sulfoxide reductase family.

The catalysed reaction is L-methionyl-[protein] + [thioredoxin]-disulfide + H2O = L-methionyl-(S)-S-oxide-[protein] + [thioredoxin]-dithiol. It catalyses the reaction [thioredoxin]-disulfide + L-methionine + H2O = L-methionine (S)-S-oxide + [thioredoxin]-dithiol. It carries out the reaction L-methionyl-[protein] + [thioredoxin]-disulfide + H2O = L-methionyl-(R)-S-oxide-[protein] + [thioredoxin]-dithiol. Functionally, has an important function as a repair enzyme for proteins that have been inactivated by oxidation. Catalyzes the reversible oxidation-reduction of methionine sulfoxide in proteins to methionine. The polypeptide is Peptide methionine sulfoxide reductase MsrA/MsrB (msrAB) (Helicobacter pylori (strain J99 / ATCC 700824) (Campylobacter pylori J99)).